Here is a 287-residue protein sequence, read N- to C-terminus: Aquaporin PIP1-1 (287 aa).

The next 2 membrane-spanning stretches (helical) occupy residues 57 to 77 (IAEFVATFLFLYISILTVMGV) and 92 to 114 (IAWSFGGMILALVYCTAGISGHI). Residues 115–117 (NPA) carry the NPA 1 motif. Helical transmembrane passes span 134 to 154 (VFYIIMQCLGAICGRGVVKGF), 176 to 196 (GDGLGAEIVGTFILVYTVFSA), and 210 to 230 (ILAPLPIGFAVFLVHLATMGI). An NPA 2 motif is present at residues 236-238 (NPA). Residues 258–278 (IFWVGPFIGAALAAIYHQVII) form a helical membrane-spanning segment.

It belongs to the MIP/aquaporin (TC 1.A.8) family. PIP (TC 1.A.8.11) subfamily. In terms of assembly, may interact with PIP1-2 to form heteromers. As to expression, highly expressed in roots, shoots and developing tassels, and at lower levels in leaves.

The protein localises to the cell membrane. Its function is as follows. Water channel required to facilitate the transport of water across cell membrane. Active as heteromers with PIP1-2, but not as homomers. The protein is Aquaporin PIP1-1 (PIP1-1) of Zea mays (Maize).